A 183-amino-acid polypeptide reads, in one-letter code: Putative 3-methyladenine DNA glycosylase (183 aa).

This sequence belongs to the DNA glycosylase MPG family.

In Rickettsia conorii (strain ATCC VR-613 / Malish 7), this protein is Putative 3-methyladenine DNA glycosylase.